The primary structure comprises 374 residues: Biotin synthase (374 aa).

A Radical SAM core domain is found at 51–278 (NTVKVNYLVN…DTEIRIAGGR (228 aa)). Residues Cys66, Cys70, and Cys73 each coordinate [4Fe-4S] cluster. Cys110, Cys143, Cys203, and Arg273 together coordinate [2Fe-2S] cluster. A disordered region spans residues 346–374 (IAGGTSVAGSAPDPAIRRRGAGTDVPANA).

This sequence belongs to the radical SAM superfamily. Biotin synthase family. As to quaternary structure, homodimer. [4Fe-4S] cluster is required as a cofactor. [2Fe-2S] cluster serves as cofactor.

It catalyses the reaction (4R,5S)-dethiobiotin + (sulfur carrier)-SH + 2 reduced [2Fe-2S]-[ferredoxin] + 2 S-adenosyl-L-methionine = (sulfur carrier)-H + biotin + 2 5'-deoxyadenosine + 2 L-methionine + 2 oxidized [2Fe-2S]-[ferredoxin]. Its pathway is cofactor biosynthesis; biotin biosynthesis; biotin from 7,8-diaminononanoate: step 2/2. Functionally, catalyzes the conversion of dethiobiotin (DTB) to biotin by the insertion of a sulfur atom into dethiobiotin via a radical-based mechanism. This chain is Biotin synthase, found in Nocardioides sp. (strain ATCC BAA-499 / JS614).